Here is a 250-residue protein sequence, read N- to C-terminus: Envelope glycoprotein L (250 aa).

Residues 1–18 (MELLLFVMSLILLTFSKA) form the signal peptide. The region spanning 31-239 (KLDDCIAAVI…ETYNSKLPFR (209 aa)) is the gL betaherpesvirus-type domain. Cys136 and Cys141 are oxidised to a cystine.

It belongs to the herpesviridae glycoprotein L (gL) family. Betaherpesvirinae gL subfamily. In terms of assembly, interacts with glycoprotein H (gH); this interaction is necessary for the correct processing and cell surface expression of gH. Part of a gH-gL-gO complex.

Its subcellular location is the virion membrane. It is found in the host cell membrane. The protein localises to the host Golgi apparatus. The protein resides in the host trans-Golgi network. The heterodimer glycoprotein H-glycoprotein L is required for the fusion of viral and plasma membranes leading to virus entry into the host cell. Acts as a functional inhibitor of gH and maintains gH in an inhibited form. Upon binding to host integrins, gL dissociates from gH leading to activation of the viral fusion glycoproteins gB and gH. The polypeptide is Envelope glycoprotein L (Human herpesvirus 6A (strain Uganda-1102) (HHV-6 variant A)).